The primary structure comprises 263 residues: Shikimate dehydrogenase (NADP(+)) (263 aa).

Residues 16–18 (SKS) and T65 contribute to the shikimate site. Catalysis depends on K69, which acts as the Proton acceptor. 2 residues coordinate shikimate: N90 and D105. NADP(+) is bound by residues 125 to 129 (GSGGS) and L208. Shikimate is bound at residue Y210. Residue G230 coordinates NADP(+).

Belongs to the shikimate dehydrogenase family. In terms of assembly, homodimer.

The catalysed reaction is shikimate + NADP(+) = 3-dehydroshikimate + NADPH + H(+). The protein operates within metabolic intermediate biosynthesis; chorismate biosynthesis; chorismate from D-erythrose 4-phosphate and phosphoenolpyruvate: step 4/7. Inhibited by curcumin, 3-(2-naphthyloxy)-4-oxo-2-(trifluoromethyl)-4H-chromen-7-yl 3-chlorobenzoate, butyl 2-{[3-(2-naphthyloxy)-4-oxo-2-(trifluoromethyl)-4H-chromen-7-yl]oxy}propanoate, 2-({2-[(2-{[2-(2,3-dimethylanilino)-2-oxoethyl]sulfanyl}-1,3-benzothiazol-6-yl)amino]-2-oxoethyl}sulfanyl)-N-(2-naphthyl)acetamide, and maesaquinone diacetate. Involved in the biosynthesis of the chorismate, which leads to the biosynthesis of aromatic amino acids. Catalyzes the reversible NADPH linked reduction of 3-dehydroshikimate (DHSA) to yield shikimate (SA). It can also use NAD to oxidize shikimate. In Helicobacter pylori (Campylobacter pylori), this protein is Shikimate dehydrogenase (NADP(+)).